We begin with the raw amino-acid sequence, 75 residues long: Large ribosomal subunit protein bL31 (75 aa).

This sequence belongs to the bacterial ribosomal protein bL31 family. Type A subfamily. In terms of assembly, part of the 50S ribosomal subunit.

Its function is as follows. Binds the 23S rRNA. This chain is Large ribosomal subunit protein bL31, found in Nitrobacter winogradskyi (strain ATCC 25391 / DSM 10237 / CIP 104748 / NCIMB 11846 / Nb-255).